The chain runs to 224 residues: UPF0758 protein PSHAa2643 (224 aa).

The MPN domain maps to 102–224; sequence IFNSPNAVYD…CVSFAERGLI (123 aa). His-173, His-175, and Asp-186 together coordinate Zn(2+). A JAMM motif motif is present at residues 173–186; that stretch reads HNHPSGIAEPSQAD.

This sequence belongs to the UPF0758 family.

The protein is UPF0758 protein PSHAa2643 of Pseudoalteromonas translucida (strain TAC 125).